Here is a 242-residue protein sequence, read N- to C-terminus: Small ribosomal subunit protein uS7m (242 aa).

A mitochondrion-targeting transit peptide spans 1–37; it reads MAAPTAKVSRGWSGLALGVRIAVLRLPGLTQVRWSRY. The residue at position 228 (K228) is an N6-acetyllysine.

It belongs to the universal ribosomal protein uS7 family. In terms of assembly, component of the mitochondrial ribosome small subunit (28S) which comprises a 12S rRNA and about 30 distinct proteins.

Its subcellular location is the mitochondrion. The chain is Small ribosomal subunit protein uS7m (MRPS7) from Bos taurus (Bovine).